A 350-amino-acid polypeptide reads, in one-letter code: Probable nicotinate-nucleotide adenylyltransferase/Ap4A hydrolase (350 aa).

Positions 1–187 (MKQKIIIFGG…YINTNHLYLI (187 aa)) are naMN adenylyltransferase. Residues 196-350 (DKRFQHCLRV…LKYVQNLVKD (155 aa)) are ap4A hydrolase. The region spanning 198-310 (RFQHCLRVGK…VYLADKLEPN (113 aa)) is the HD domain. An ADP-binding site is contributed by H201. Fe cation is bound by residues H201, H230, and D231. Residues 231-234 (DLAK), H261, 287-288 (HT), D305, and R311 each bind ADP. D305 lines the Fe cation pocket.

It in the N-terminal section; belongs to the NadD family. The protein in the C-terminal section; belongs to the Ap4A hydrolase YqeK family.

It carries out the reaction nicotinate beta-D-ribonucleotide + ATP + H(+) = deamido-NAD(+) + diphosphate. It catalyses the reaction P(1),P(4)-bis(5'-adenosyl) tetraphosphate + H2O = 2 ADP + 2 H(+). Its pathway is cofactor biosynthesis; NAD(+) biosynthesis; deamido-NAD(+) from nicotinate D-ribonucleotide: step 1/1. Its function is as follows. Catalyzes the reversible adenylation of nicotinate mononucleotide (NaMN) to nicotinic acid adenine dinucleotide (NaAD). Hydrolyzes diadenosine 5',5'''-P1,P4-tetraphosphate (Ap4A) to yield ADP. The sequence is that of Probable nicotinate-nucleotide adenylyltransferase/Ap4A hydrolase from Mycoplasma genitalium (strain ATCC 33530 / DSM 19775 / NCTC 10195 / G37) (Mycoplasmoides genitalium).